Consider the following 342-residue polypeptide: MSEESDSLRTSPSVASLSENELPPPPEPPGYVCSLTEDLVTKAREELQEKPEWRLRDVQALRDMVRKEYPNLSTSLDDAFLLRFLRARKFDYDRALQLLVNYHSCRRSWPEVFNNLKPSALKDVLASGFLTVLPHTDPRGCHVVCIRPDRWIPSNYPITENIRAIYLTLEKLIQSEETQVNGIVILADYKGVSLSKASHFGPFIAKKVIGILQDGFPIRIKAVHVVNEPRIFKGIFAIIKPFLKEKIANRFFLHGSDLNSLHTNLPRSILPKEYGGTAGELDTATWNAVLLASEDDFVKEFCQPVPTCDSILGQTLLPEGLTSDAQCDDSLRAVKSQLYSCY.

The disordered stretch occupies residues 1 to 31; it reads MSEESDSLRTSPSVASLSENELPPPPEPPGY. Polar residues predominate over residues 8-19; that stretch reads LRTSPSVASLSE. Residues 117-282 form the CRAL-TRIO domain; sequence KPSALKDVLA…EYGGTAGELD (166 aa).

In terms of biological role, may act as a protein that binds a hydrophobic ligand. This is Alpha-tocopherol transfer protein-like (TTPAL) from Pongo abelii (Sumatran orangutan).